The following is a 122-amino-acid chain: Basic phospholipase A2 F16 (122 aa).

7 disulfides stabilise this stretch: cysteine 26–cysteine 115, cysteine 28–cysteine 44, cysteine 43–cysteine 95, cysteine 49–cysteine 122, cysteine 50–cysteine 88, cysteine 57–cysteine 81, and cysteine 75–cysteine 86. Tyrosine 27, glycine 29, and glycine 31 together coordinate Ca(2+). The active site involves histidine 47. Aspartate 48 serves as a coordination point for Ca(2+). Aspartate 89 is a catalytic residue.

It belongs to the phospholipase A2 family. Group II subfamily. D49 sub-subfamily. It depends on Ca(2+) as a cofactor. Expressed by the venom gland.

It localises to the secreted. It catalyses the reaction a 1,2-diacyl-sn-glycero-3-phosphocholine + H2O = a 1-acyl-sn-glycero-3-phosphocholine + a fatty acid + H(+). With respect to regulation, pre-incubation with heparin markedly reduces the neurotoxicity of this toxin. Functionally, snake venom phospholipase A2 (PLA2) that produces neuromuscular blockade in chick biventer cervicis preparations in the absence and presence of crotapotin. In contrast, in mouse phrenic nerve-diaphragm preparations, the neuromuscular blockade is dependent on crotapotin. PLA2 catalyzes the calcium-dependent hydrolysis of the 2-acyl groups in 3-sn-phosphoglycerides. This Crotalus durissus terrificus (South American rattlesnake) protein is Basic phospholipase A2 F16.